The chain runs to 251 residues: Zinc import ATP-binding protein ZnuC (251 aa).

Residues 5–220 enclose the ABC transporter domain; sequence VSLENVSVSF…PEFISMFGPR (216 aa). Residue 37–44 coordinates ATP; sequence GPNGAGKS.

Belongs to the ABC transporter superfamily. Zinc importer (TC 3.A.1.15.5) family. As to quaternary structure, the complex is composed of two ATP-binding proteins (ZnuC), two transmembrane proteins (ZnuB) and a solute-binding protein (ZnuA).

It is found in the cell inner membrane. It catalyses the reaction Zn(2+)(out) + ATP(in) + H2O(in) = Zn(2+)(in) + ADP(in) + phosphate(in) + H(+)(in). In terms of biological role, part of the ABC transporter complex ZnuABC involved in zinc import. Responsible for energy coupling to the transport system. This Shigella dysenteriae serotype 1 (strain Sd197) protein is Zinc import ATP-binding protein ZnuC.